Consider the following 148-residue polypeptide: MLDILVYLYESFRMAELAPDRDALEKRLFAAGFEEAHINATLDWFANLTSSAAHDRLAYAQYRHYAPEELESLNDACREEISYLVGAEILDPESREWVISGLMALAGEDIEPDHVRWMTLIVLWSRGLIEHFTHLEEMLLNHEPGRLH.

Belongs to the Smg family.

This chain is Protein Smg homolog, found in Thiobacillus denitrificans (strain ATCC 25259 / T1).